A 344-amino-acid chain; its full sequence is Biotin synthase (344 aa).

Positions 36 to 260 constitute a Radical SAM core domain; sequence NQIQISTLLS…MMPTSYIRLS (225 aa). Residues cysteine 51, cysteine 55, and cysteine 58 each coordinate [4Fe-4S] cluster. [2Fe-2S] cluster-binding residues include cysteine 95, cysteine 126, cysteine 186, and arginine 258.

The protein belongs to the radical SAM superfamily. Biotin synthase family. As to quaternary structure, homodimer. It depends on [4Fe-4S] cluster as a cofactor. [2Fe-2S] cluster is required as a cofactor.

It carries out the reaction (4R,5S)-dethiobiotin + (sulfur carrier)-SH + 2 reduced [2Fe-2S]-[ferredoxin] + 2 S-adenosyl-L-methionine = (sulfur carrier)-H + biotin + 2 5'-deoxyadenosine + 2 L-methionine + 2 oxidized [2Fe-2S]-[ferredoxin]. The protein operates within cofactor biosynthesis; biotin biosynthesis; biotin from 7,8-diaminononanoate: step 2/2. In terms of biological role, catalyzes the conversion of dethiobiotin (DTB) to biotin by the insertion of a sulfur atom into dethiobiotin via a radical-based mechanism. In Buchnera aphidicola subsp. Baizongia pistaciae (strain Bp), this protein is Biotin synthase.